Consider the following 380-residue polypeptide: Bifunctional dihydropteroate synthase/dihydropteroate reductase (380 aa).

The dihydropteroate reductase stretch occupies residues 1 to 104 (MIVKRLNPDA…SQPFGLKHLA (104 aa)). The tract at residues 105-380 (QELKSHLKAP…KVFKSLEETD (276 aa)) is dihydropteroate synthase. A Pterin-binding domain is found at 119–371 (PQIMAVLNLT…DIDEHIDLIK (253 aa)). Asparagine 126 serves as a coordination point for Mg(2+). Residues aspartate 202, asparagine 221, aspartate 289, lysine 325, and 359–361 (RVH) each bind (7,8-dihydropterin-6-yl)methyl diphosphate.

It in the C-terminal section; belongs to the DHPS family. The cofactor is FAD. It depends on FMN as a cofactor. Mg(2+) is required as a cofactor.

It catalyses the reaction (7,8-dihydropterin-6-yl)methyl diphosphate + 4-aminobenzoate = 7,8-dihydropteroate + diphosphate. The enzyme catalyses (6S)-5,6,7,8-tetrahydropteroate + NAD(+) = 7,8-dihydropteroate + NADH + H(+). It functions in the pathway cofactor biosynthesis; tetrahydrofolate biosynthesis; 7,8-dihydrofolate from 2-amino-4-hydroxy-6-hydroxymethyl-7,8-dihydropteridine diphosphate and 4-aminobenzoate: step 1/2. Its function is as follows. Bifunctional enzyme that catalyzes the formation of dihydropteroate, the immediate precursor of folic acid and the reduction of dihydropteroate to tetrahydropteroate. The polypeptide is Bifunctional dihydropteroate synthase/dihydropteroate reductase (Helicobacter pylori (strain ATCC 700392 / 26695) (Campylobacter pylori)).